The sequence spans 377 residues: NADP-dependent oxidoreductase lnbE (377 aa).

NADP(+) is bound by residues 170–173, 257–263, and 293–295; these read GGNG, LTNPRVS, and SPV.

This sequence belongs to the NADP-dependent oxidoreductase L4BD family.

It participates in secondary metabolite biosynthesis. Its function is as follows. NADP-dependent oxidoreductase; part of the lnb gene cluster that mediates the biosynthesis of diastereomeric piperazines. Lna and lnb clusters encode sets of enzymes that produce overlapping sets of previously undescribed metabolites such as piperazinomycin-like metabolites or morpholine. The lna and lnb biosynthetic pathways appear to be part of a signaling network that controls the formation of sclerotia, a resilient overwintering structure. One primary function of the non-canonical nonribosomal peptide synthetases lnaA and lnbA consists in the reduction of L-tyrosine. The presence in the clusters of tailoring enzymes such as the oxidoreductases lnaB, lnbB, lnaE or lnbE, as well as of the cytochrome P450 monooxygenases lnaC, lnaD, or lnbC, might explain formation of various diastereomeric piperazines. The chain is NADP-dependent oxidoreductase lnbE from Aspergillus flavus (strain ATCC 200026 / FGSC A1120 / IAM 13836 / NRRL 3357 / JCM 12722 / SRRC 167).